The primary structure comprises 523 residues: Sodium-dependent lysophosphatidylcholine symporter 1-B (523 aa).

Over 1–34 (MAKGEGAEQYTNTSLLQKPSPDEVKLAKHETKSR) the chain is Cytoplasmic. Residues 35–64 (LSVCSKLCYAIGGAPYQITGCAIGFFLQIY) form a helical membrane-spanning segment. Over 65–75 (LLDVALLDPFY) the chain is Extracellular. Residues 76–96 (ASIILFVGRAWDAVTDPTVGF) form a helical membrane-spanning segment. Residues 97 to 108 (LVSRTPWTRFGR) lie on the Cytoplasmic side of the membrane. A helical membrane pass occupies residues 109–128 (MMPWIVLSTPFAVLCYFLIW). Residues 129-138 (YVPSVDQGKV) are Extracellular-facing. The helical transmembrane segment at 139-163 (VWYLIFYCCFQTLQTCFHVPYSALT) threads the bilayer. Residues 164–170 (MFISTEQ) lie on the Cytoplasmic side of the membrane. The chain crosses the membrane as a helical span at residues 171–202 (KERDSATAYRMTVEVLGTLIGTAIQGQIVGMA). Residues 203–226 (NAPCISTEIDLNSTGLEVAPDVNI) lie on the Extracellular side of the membrane. A disulfide bridge connects residues Cys-206 and Cys-457. Residues Asn-214 and Asn-225 are each glycosylated (N-linked (GlcNAc...) asparagine). Residues 227–260 (TDPHVSLQDLRNAYMIASGVICAIYVVCAVVLFL) traverse the membrane as a helical segment. Residues 261–290 (GVKEQKDTCRVRTEPMSFFQGICMVMGHGP) lie on the Cytoplasmic side of the membrane. A helical transmembrane segment spans residues 291-317 (YAKLVMGFLFTSLAFMLLEGNFALFCI). The Extracellular portion of the chain corresponds to 318 to 328 (YNLGFRNDFQN). Residues 329–347 (VLLVIMLSATLAIPFWQWF) form a helical membrane-spanning segment. Over 348 to 351 (LTKF) the chain is Cytoplasmic. The chain crosses the membrane as a helical span at residues 352–373 (GKKTAVYIGTTSVVPFLISVVL). Over 374-376 (VPS) the chain is Extracellular. A helical transmembrane segment spans residues 377-413 (SLAVTYIASFAAGVSVAAAFLLPWSMLPDVVDDFKVQ). Topologically, residues 414 to 423 (NPESQGHEAI) are cytoplasmic. A helical transmembrane segment spans residues 424 to 450 (FYSFYVFFTKFASGVSLGVSTLSLDFA). Residues 451 to 462 (GYVTRGCTQPGE) lie on the Extracellular side of the membrane. The chain crosses the membrane as a helical span at residues 463-486 (VKLTLKILVSAAPIVLIIIGLLIF). Residues 487-523 (ISYPINEEKRQGNRKLLNEQRENEMDSETDSTELNVV) are Cytoplasmic-facing. Residues 504–523 (NEQRENEMDSETDSTELNVV) form a disordered region.

The protein belongs to the major facilitator superfamily. Expressed in the developing nervous system.

Its subcellular location is the cell membrane. The protein localises to the endoplasmic reticulum membrane. The enzyme catalyses a 1-acyl-sn-glycero-3-phosphocholine(in) + Na(+)(in) = a 1-acyl-sn-glycero-3-phosphocholine(out) + Na(+)(out). It catalyses the reaction 1-(4Z,7Z,10Z,13Z,16Z,19Z-docosahexaenoyl)-sn-glycero-3-phosphocholine(in) + Na(+)(in) = 1-(4Z,7Z,10Z,13Z,16Z,19Z-docosahexaenoyl)-sn-glycero-3-phosphocholine(out) + Na(+)(out). The catalysed reaction is 1-(9Z-octadecenoyl)-sn-glycero-3-phosphocholine(in) + Na(+)(in) = 1-(9Z-octadecenoyl)-sn-glycero-3-phosphocholine(out) + Na(+)(out). It carries out the reaction 1-hexadecanoyl-sn-glycero-3-phosphocholine(in) + Na(+)(in) = 1-hexadecanoyl-sn-glycero-3-phosphocholine(out) + Na(+)(out). The enzyme catalyses a 1-acyl-sn-glycero-3-phosphoethanolamine(in) + Na(+)(in) = a 1-acyl-sn-glycero-3-phosphoethanolamine(out) + Na(+)(out). In terms of biological role, sodium-dependent lysophosphatidylcholine (LPC) symporter, which plays an essential role for blood-brain barrier formation and function. Specifically expressed in endothelium of the blood-brain barrier of micro-vessels and transports LPC into the brain. Transport of LPC is essential because it constitutes the major mechanism by which docosahexaenoic acid (DHA), an omega-3 fatty acid that is essential for normal brain growth and cognitive function, enters the brain. Transports LPC carrying long-chain fatty acids such LPC oleate and LPC palmitate with a minimum acyl chain length of 14 carbons. Does not transport docosahexaenoic acid in unesterified fatty acid. The protein is Sodium-dependent lysophosphatidylcholine symporter 1-B (mfsd2ab) of Danio rerio (Zebrafish).